The primary structure comprises 337 residues: tRNA N6-adenosine threonylcarbamoyltransferase (337 aa).

Positions 111 and 115 each coordinate Fe cation. Substrate contacts are provided by residues 134–138 (LVSGG), Asp-167, Gly-180, and Asn-272. Fe cation is bound at residue Asp-300.

Belongs to the KAE1 / TsaD family. Fe(2+) is required as a cofactor.

The protein localises to the cytoplasm. It catalyses the reaction L-threonylcarbamoyladenylate + adenosine(37) in tRNA = N(6)-L-threonylcarbamoyladenosine(37) in tRNA + AMP + H(+). Its function is as follows. Required for the formation of a threonylcarbamoyl group on adenosine at position 37 (t(6)A37) in tRNAs that read codons beginning with adenine. Is involved in the transfer of the threonylcarbamoyl moiety of threonylcarbamoyl-AMP (TC-AMP) to the N6 group of A37, together with TsaE and TsaB. TsaD likely plays a direct catalytic role in this reaction. The polypeptide is tRNA N6-adenosine threonylcarbamoyltransferase (Citrobacter koseri (strain ATCC BAA-895 / CDC 4225-83 / SGSC4696)).